The following is a 374-amino-acid chain: UDP-N-acetylglucosamine--N-acetylmuramyl-(pentapeptide) pyrophosphoryl-undecaprenol N-acetylglucosamine transferase (374 aa).

UDP-N-acetyl-alpha-D-glucosamine contacts are provided by residues 13–15 (TGG), Asn-124, Arg-165, Ser-193, and Gln-294.

This sequence belongs to the glycosyltransferase 28 family. MurG subfamily.

The protein resides in the cell inner membrane. The enzyme catalyses di-trans,octa-cis-undecaprenyl diphospho-N-acetyl-alpha-D-muramoyl-L-alanyl-D-glutamyl-meso-2,6-diaminopimeloyl-D-alanyl-D-alanine + UDP-N-acetyl-alpha-D-glucosamine = di-trans,octa-cis-undecaprenyl diphospho-[N-acetyl-alpha-D-glucosaminyl-(1-&gt;4)]-N-acetyl-alpha-D-muramoyl-L-alanyl-D-glutamyl-meso-2,6-diaminopimeloyl-D-alanyl-D-alanine + UDP + H(+). Its pathway is cell wall biogenesis; peptidoglycan biosynthesis. Its function is as follows. Cell wall formation. Catalyzes the transfer of a GlcNAc subunit on undecaprenyl-pyrophosphoryl-MurNAc-pentapeptide (lipid intermediate I) to form undecaprenyl-pyrophosphoryl-MurNAc-(pentapeptide)GlcNAc (lipid intermediate II). In Rhizobium etli (strain ATCC 51251 / DSM 11541 / JCM 21823 / NBRC 15573 / CFN 42), this protein is UDP-N-acetylglucosamine--N-acetylmuramyl-(pentapeptide) pyrophosphoryl-undecaprenol N-acetylglucosamine transferase.